The primary structure comprises 317 residues: MGDVIKSIFTFVLIVEFIIGNLGNSFIALVNCIDWVKGRKISSVDQILTALAISRISLVWLIFGSWCVSVFLPALFATEKMFRMLTNIWTVINHFSVWLATGLGTFYFLKIANFSNSIFLYLKWRVKKVVLVLLLVTSVFLFLNIALINIHINASINGYRRNKTCSSDSSNFTRFSSLIVLTSTVFIFIPFTLSLAMFLLLIFSLWKHRKKMQHXVKRSGDASTKAHRGVKSVITFFLLYAIFCLSFFISVWTSERLEENLIILSQVMGMAYPSCHSCVLILGNKKLRQASLSVLLWLRYMFKDGEPSGHKEFRESS.

At 1–7 the chain is on the extracellular side; the sequence is MGDVIKS. A helical membrane pass occupies residues 8-28; it reads IFTFVLIVEFIIGNLGNSFIA. The Cytoplasmic segment spans residues 29 to 55; the sequence is LVNCIDWVKGRKISSVDQILTALAISR. A helical membrane pass occupies residues 56–76; that stretch reads ISLVWLIFGSWCVSVFLPALF. The Extracellular portion of the chain corresponds to 77–87; sequence ATEKMFRMLTN. Positions 86 and 89 each coordinate cholesterol. The helical transmembrane segment at 88–108 threads the bilayer; that stretch reads IWTVINHFSVWLATGLGTFYF. The Cytoplasmic portion of the chain corresponds to 109–129; it reads LKIANFSNSIFLYLKWRVKKV. Residues 130–150 form a helical membrane-spanning segment; the sequence is VLVLLLVTSVFLFLNIALINI. The Extracellular segment spans residues 151–184; that stretch reads HINASINGYRRNKTCSSDSSNFTRFSSLIVLTST. Residues N153, N162, and N171 are each glycosylated (N-linked (GlcNAc...) asparagine). V180 is a cholesterol binding site. Residues 185-205 form a helical membrane-spanning segment; that stretch reads VFIFIPFTLSLAMFLLLIFSL. Residues 206–232 lie on the Cytoplasmic side of the membrane; that stretch reads WKHRKKMQHXVKRSGDASTKAHRGVKS. The chain crosses the membrane as a helical span at residues 233–253; the sequence is VITFFLLYAIFCLSFFISVWT. The Extracellular segment spans residues 254–261; the sequence is SERLEENL. A helical transmembrane segment spans residues 262 to 282; that stretch reads IILSQVMGMAYPSCHSCVLIL. Residues S265 and M268 each contribute to the cholesterol site. Residues 283–317 lie on the Cytoplasmic side of the membrane; that stretch reads GNKKLRQASLSVLLWLRYMFKDGEPSGHKEFRESS.

The protein belongs to the G-protein coupled receptor T2R family. As to quaternary structure, core component of the TAS2R14-GNAI1 complex, consisting of TAS2R14, GNAI1, GNB1 and GNG2; within the complex interacts with GNAI1. Core component of the TAS2R14-GNAT3 complex, consisting of TAS2R14, GNAT3, GNB1 and GNG2; within the complex interacts with GNAT3. Core component of the TAS2R14-GNAS2 complex, consisting of TAS2R14, GNAS2, GNB1 and GNG2; within the complex interacts with GNAS2.

The protein resides in the membrane. It catalyses the reaction Ca(2+)(in) = Ca(2+)(out). It carries out the reaction 3',5'-cyclic AMP(in) = 3',5'-cyclic AMP(out). Basal activity is enhanced by binding to bitter tastants, such as flufenamic acid and aristolochic acid. Regulated by cholesterol in a concentration-dependent manner. Functionally, gustducin-linked G-protein coupled receptor that plays a role in the perception of bitterness. The activity of this receptor stimulates GNAT3, activating the gustducin G-protein pathway. Likely plays a role in sensing the chemical composition of the gastrointestinal content and other extra-oral tissues via the inhibitory G-protein pathways. This chain is Taste receptor type 2 member 14 (TAS2R14), found in Gorilla gorilla gorilla (Western lowland gorilla).